Consider the following 582-residue polypeptide: Formate--tetrahydrofolate ligase (582 aa).

Position 65-72 (65-72) interacts with ATP; that stretch reads TPLGEGKT.

It belongs to the formate--tetrahydrofolate ligase family.

It carries out the reaction (6S)-5,6,7,8-tetrahydrofolate + formate + ATP = (6R)-10-formyltetrahydrofolate + ADP + phosphate. The protein operates within one-carbon metabolism; tetrahydrofolate interconversion. The chain is Formate--tetrahydrofolate ligase from Vibrio parahaemolyticus serotype O3:K6 (strain RIMD 2210633).